The chain runs to 263 residues: Acyl-[acyl-carrier-protein]--UDP-N-acetylglucosamine O-acyltransferase (263 aa).

It belongs to the transferase hexapeptide repeat family. LpxA subfamily. As to quaternary structure, homotrimer.

The protein localises to the cytoplasm. The catalysed reaction is a (3R)-hydroxyacyl-[ACP] + UDP-N-acetyl-alpha-D-glucosamine = a UDP-3-O-[(3R)-3-hydroxyacyl]-N-acetyl-alpha-D-glucosamine + holo-[ACP]. It functions in the pathway glycolipid biosynthesis; lipid IV(A) biosynthesis; lipid IV(A) from (3R)-3-hydroxytetradecanoyl-[acyl-carrier-protein] and UDP-N-acetyl-alpha-D-glucosamine: step 1/6. In terms of biological role, involved in the biosynthesis of lipid A, a phosphorylated glycolipid that anchors the lipopolysaccharide to the outer membrane of the cell. The chain is Acyl-[acyl-carrier-protein]--UDP-N-acetylglucosamine O-acyltransferase from Xanthomonas axonopodis pv. citri (strain 306).